A 362-amino-acid polypeptide reads, in one-letter code: Glycyl-glycine endopeptidase ALE-1 (362 aa).

The N-terminal stretch at 1–35 is a signal peptide; sequence MDTNRKFTLVKSLSIGLGTFLVGSVFLTVNDEASA. A disordered region spans residues 35 to 110; sequence ASTKVDAPKV…PAKADAPKVE (76 aa). A compositionally biased stretch (basic and acidic residues) spans 40–110; the sequence is DAPKVEQEAP…PAKADAPKVE (71 aa). Residues histidine 150 and aspartate 154 each contribute to the Zn(2+) site. Histidine 231 is a catalytic residue. Position 233 (histidine 233) interacts with Zn(2+). Positions 282 to 350 constitute an SH3b domain; the sequence is SESASFTANT…YLPVRTWNES (69 aa).

Belongs to the peptidase M23B family. Zn(2+) serves as cofactor.

The protein resides in the secreted. The catalysed reaction is Hydrolysis of the -Gly-|-Gly- bond in the pentaglycine inter-peptide link joining staphylococcal cell wall peptidoglycans.. Functionally, lyses staphylococcal cells by hydrolyzing the polyglycine interpeptide bridges of the peptidoglycan. The chain is Glycyl-glycine endopeptidase ALE-1 from Staphylococcus capitis.